A 384-amino-acid chain; its full sequence is Oxoeicosanoid receptor 1 (384 aa).

The disordered stretch occupies residues 1 to 21 (MELHNLSSPSPSLSSSVLPPS). The Extracellular portion of the chain corresponds to 1 to 58 (MELHNLSSPSPSLSSSVLPPSFSPSPSSAPSAFTTVGGSSGGPCHPTSSSLVSAFLAP). N-linked (GlcNAc...) asparagine glycosylation is present at N5. The span at 7–21 (SSPSPSLSSSVLPPS) shows a compositional bias: low complexity. The chain crosses the membrane as a helical span at residues 59–79 (ILALEFVLGLVGNSLALFIFC). Over 80-87 (IHTRPWTS) the chain is Cytoplasmic. A helical transmembrane segment spans residues 88–108 (NTVFLVSLVAADFLLISNLPL). At 109–129 (RVDYYLLHETWRFGAAACKVN) the chain is on the extracellular side. A disulfide bond links C126 and C198. A helical transmembrane segment spans residues 130–152 (LFMLSTNRTASVVFLTAIALNRY). The Cytoplasmic segment spans residues 153–172 (LKVVQPHHVLSRASVGAAAR). Residues 173-193 (VAGGLWVGILLLNGHLLLSTF) traverse the membrane as a helical segment. Topologically, residues 194-215 (SGPSCLSYRVGTKPSASLRWHQ) are extracellular. The helical transmembrane segment at 216 to 236 (ALYLLEFFLPLALILFAIVSI) threads the bilayer. The Cytoplasmic segment spans residues 237 to 256 (GLTIRNRGLGGQAGPQRAMR). The chain crosses the membrane as a helical span at residues 257-277 (VLAMVVAVYTICFLPSIIFGM). Topologically, residues 278-297 (ASMVAFWLSACRSLDLCTQL) are extracellular. A helical transmembrane segment spans residues 298-318 (FHGSLAFTYLNSVLDPVLYCF). The Cytoplasmic segment spans residues 319–384 (SSPNFLHQSR…SLEKEGSSQG (66 aa)).

This sequence belongs to the G-protein coupled receptor 1 family. Expressed in various tissues except brain. Expression is more intense in liver, kidney, peripheral leukocyte, lung, and spleen than in other tissues. Highly expressed in eosinophils, neutrophils, and lung macrophages.

The protein localises to the membrane. Its function is as follows. Receptor for eicosanoids and polyunsaturated fatty acids such as 5-oxo-6E,8Z,11Z,14Z-eicosatetraenoic acid (5-OXO-ETE), 5(S)-hydroperoxy-6E,8Z,11Z,14Z-eicosatetraenoic acid (5(S)-HPETE) and arachidonic acid. Seems to be coupled to the G(i)/G(o), families of heteromeric G proteins. The sequence is that of Oxoeicosanoid receptor 1 (OXER1) from Homo sapiens (Human).